The chain runs to 261 residues: Claudin-18 (261 aa).

Over 1–6 the chain is Cytoplasmic; that stretch reads MATTTC. Residues 7–27 traverse the membrane as a helical segment; that stretch reads QVVGLLLSLLGLAGCIAATGM. The Extracellular portion of the chain corresponds to 28–80; that stretch reads DMWSTQDLYDNPVTSVFQYEGLWRSCVQQSSGFTECRPYFTILGLPAMLQAVR. The helical transmembrane segment at 81 to 101 threads the bilayer; sequence ALMIVGIVLGVIGILVSIFAL. The Cytoplasmic segment spans residues 102-122; sequence KCIRIGSMDDSAKAKMTLTSG. Residues 123-143 traverse the membrane as a helical segment; it reads IMFIISGVCAIIGVSVFANML. The Extracellular segment spans residues 144 to 173; the sequence is VTNFWMSTANMYSGMGGMVQTVQTRYTFGA. Residues 174–194 traverse the membrane as a helical segment; the sequence is ALFVGWIAGGLTLIGGVMMCI. The Cytoplasmic segment spans residues 195–261; that stretch reads ACRGLTPDDR…QSHPTKYDYV (67 aa). Residues 195-261 form a required for role in regulation of RANKL-induced osteoclast differentiation region; the sequence is ACRGLTPDDR…QSHPTKYDYV (67 aa). Position 214 is a phosphoserine (serine 214). A disordered region spans residues 242–261; it reads DGGARTEDDEQSHPTKYDYV.

It belongs to the claudin family. Interacts with TJP2/ZO-2. Interacts with TJP1/ZO-1. Interacts with YAP1 (phosphorylated); the interaction sequesters YAP1 away from the nucleus and thereby restricts transcription of YAP1 target genes. Interacts with CLDN19. In terms of tissue distribution, expressed in the lung (at protein level).

The protein localises to the cell junction. It localises to the tight junction. It is found in the cell membrane. Involved in alveolar fluid homeostasis via regulation of alveolar epithelial tight junction composition and therefore ion transport and solute permeability, potentially via downstream regulation of the actin cytoskeleton organization and beta-2-adrenergic signaling. Required for lung alveolarization and maintenance of the paracellular alveolar epithelial barrier. Acts to maintain epithelial progenitor cell proliferation and organ size, via regulation of YAP1 localization away from the nucleus and thereby restriction of YAP1 target gene transcription. Acts as a negative regulator of RANKL-induced osteoclast differentiation, potentially via relocation of TJP2/ZO-2 away from the nucleus, subsequently involved in bone resorption in response to calcium deficiency. Mediates the osteoprotective effects of estrogen, potentially via acting downstream of estrogen signaling independently of RANKL signaling pathways. Functionally, required for the formation of the gastric paracellular barrier via its role in tight junction formation, thereby involved in the response to gastric acidification. In Rattus norvegicus (Rat), this protein is Claudin-18.